We begin with the raw amino-acid sequence, 184 residues long: Ribosome-recycling factor (184 aa).

The protein belongs to the RRF family.

It localises to the cytoplasm. In terms of biological role, responsible for the release of ribosomes from messenger RNA at the termination of protein biosynthesis. May increase the efficiency of translation by recycling ribosomes from one round of translation to another. The protein is Ribosome-recycling factor of Acinetobacter baylyi (strain ATCC 33305 / BD413 / ADP1).